The sequence spans 273 residues: MAVVKCKPTSPGRRHVVKVVNPELHKGKPFAPLVEKNSKSGGRNNNGRITTRHIGGGHKQAYRIVDFKRNKDGIPATVERLEYDPNRSANIALVLYKDGERRYILAPKGLKAGDQIQSGVDAAIKAGNTLPMRNIPVGSTVHNVEMKPGKGGQLARSAGTYVQIVARDGAYVTLRLRSGEMRKVEADCRATLGEVGNAEHMLRVLGKAGAARWRGIRPTVRGTAMNPVDHPHGGGEGRNFGKHPVTPWGVQTKGKKTRSNKRTDKFIVRRRSK.

Disordered stretches follow at residues 28–53 and 221–273; these read KPFA…TTRH and RGTA…RRSK. The segment covering 39–48 has biased composition (low complexity); that stretch reads KSGGRNNNGR.

It belongs to the universal ribosomal protein uL2 family. Part of the 50S ribosomal subunit. Forms a bridge to the 30S subunit in the 70S ribosome.

One of the primary rRNA binding proteins. Required for association of the 30S and 50S subunits to form the 70S ribosome, for tRNA binding and peptide bond formation. It has been suggested to have peptidyltransferase activity; this is somewhat controversial. Makes several contacts with the 16S rRNA in the 70S ribosome. The polypeptide is Large ribosomal subunit protein uL2 (Enterobacter sp. (strain 638)).